The primary structure comprises 727 residues: Alpha-1,3-galactosidase A (727 aa).

Residues 220–241 (ATNRTWRTSNPVFPERHEDHRP) form a disordered region. Over residues 221-230 (TNRTWRTSNP) the composition is skewed to polar residues. 6 PbH1 repeats span residues 336–358 (KGTVRITNSVFDNPQDDPINIHG), 461–483 (TPTVEITGNTFQAVPTRGILVTT), 484–506 (RRPVRIENNRFDGMSMASIYISS), 517–538 (VRNVTIRGNVFDRPASPVIFFD), 551–572 (HRNVLIEDNDFNLTGGTILSGR), and 574–603 (VGGLTFRDNRVERYPHLRLTGPSRALRVGD).

This sequence belongs to the glycosyl hydrolase 110 family. A subfamily.

The enzyme catalyses Hydrolysis of terminal, non-reducing branched (1-&gt;3)-alpha-D-galactosidic residues, producing free D-galactose.. It catalyses the reaction Hydrolysis of terminal, non-reducing alpha-D-galactose residues in alpha-D-galactosides, including galactose oligosaccharides, galactomannans and galactolipids.. In terms of biological role, alpha-galactosidase that specifically removes branched alpha-1,3-linked galactose residues present in blood group B antigens. Has no activity toward linear alpha-1,3-linked galactose residues. The sequence is that of Alpha-1,3-galactosidase A (glaA) from Peterkaempfera griseoplana (Streptacidiphilus griseoplanus).